The sequence spans 531 residues: UDP-glucuronosyltransferase 1A7 (531 aa).

The first 25 residues, 1 to 25 (MAPADVPASLPLGLCLLLASGFGHA), serve as a signal peptide directing secretion. N-linked (GlcNAc...) asparagine glycosylation is found at Asn-71, Asn-293, and Asn-431. The helical transmembrane segment at 487–503 (LDVIGFLLAIVLTVVFI) threads the bilayer.

Belongs to the UDP-glycosyltransferase family. Homodimer. Homooligomer. Interacts with UGT1A1, UGT1A3, UGT1A4, UGT1A6, UGT1A8, UGT1A9 and UGT1A10 to form heterodimers.

Its subcellular location is the endoplasmic reticulum membrane. The enzyme catalyses glucuronate acceptor + UDP-alpha-D-glucuronate = acceptor beta-D-glucuronoside + UDP + H(+). It catalyses the reaction 17alpha-estradiol + UDP-alpha-D-glucuronate = 17alpha-estradiol 3-O-(beta-D-glucuronate) + UDP + H(+). It carries out the reaction prunetin + UDP-alpha-D-glucuronate = prunetin-5-O-beta-D-glucuronide + UDP. The catalysed reaction is 5-epi-5-F2t-IsoP + UDP-alpha-D-glucuronate = 5-epi-5-F2t-IsoP-glucuronide + UDP + H(+). The enzyme catalyses (E)-ferulate + UDP-alpha-D-glucuronate = (E)-ferulic acid beta-D-glucuronate ester + UDP. It catalyses the reaction candesartan + UDP-alpha-D-glucuronate = candesartan O-beta-D-glucuronoside + UDP. It carries out the reaction SN-38 + UDP-alpha-D-glucuronate = SN-38 O-beta-D-glucuronide + UDP + H(+). The catalysed reaction is mycophenolate + UDP-alpha-D-glucuronate = mycophenolate 7-O-beta-D-glucuronide + UDP + H(+). UDP-glucuronosyltransferase (UGT) that catalyzes phase II biotransformation reactions in which lipophilic substrates are conjugated with glucuronic acid to increase the metabolite's water solubility, thereby facilitating excretion into either the urine or bile. Essential for the elimination and detoxification of drugs, xenobiotics and endogenous compounds. Catalyzes the glucuronidation of endogenous estrogen hormone epiestradiol. Involved in the glucuronidation of F2-isoprostane (5-epi-5-F2t-IsoP). Involved in the glucuronidation of the phytochemical ferulic acid at the carboxylic acid group. Also catalyzes the glucuronidation of the isoflavones genistein, daidzein, glycitein, formononetin, biochanin A and prunetin, which are phytoestrogens with anticancer and cardiovascular properties. Involved in the glucuronidation of the AGTR1 angiotensin receptor antagonist caderastan, a drug which can inhibit the effect of angiotensin II. Involved in the biotransformation of 7-ethyl-10-hydroxycamptothecin (SN-38), the pharmacologically active metabolite of the anticancer drug irinotecan. Also metabolizes mycophenolate, an immunosuppressive agent. In Rattus norvegicus (Rat), this protein is UDP-glucuronosyltransferase 1A7.